The chain runs to 291 residues: ATP phosphoribosyltransferase (291 aa).

Belongs to the ATP phosphoribosyltransferase family. Long subfamily. Mg(2+) is required as a cofactor.

The protein resides in the cytoplasm. The enzyme catalyses 1-(5-phospho-beta-D-ribosyl)-ATP + diphosphate = 5-phospho-alpha-D-ribose 1-diphosphate + ATP. The protein operates within amino-acid biosynthesis; L-histidine biosynthesis; L-histidine from 5-phospho-alpha-D-ribose 1-diphosphate: step 1/9. Feedback inhibited by histidine. Catalyzes the condensation of ATP and 5-phosphoribose 1-diphosphate to form N'-(5'-phosphoribosyl)-ATP (PR-ATP). Has a crucial role in the pathway because the rate of histidine biosynthesis seems to be controlled primarily by regulation of HisG enzymatic activity. This Geotalea daltonii (strain DSM 22248 / JCM 15807 / FRC-32) (Geobacter daltonii) protein is ATP phosphoribosyltransferase.